The chain runs to 38 residues: Cytochrome b6-f complex subunit 5 (38 aa).

The chain crosses the membrane as a helical span at residues 5–25 (LLLGIVLGLIPITLAGLFVAA).

It belongs to the PetG family. The 4 large subunits of the cytochrome b6-f complex are cytochrome b6, subunit IV (17 kDa polypeptide, PetD), cytochrome f and the Rieske protein, while the 4 small subunits are PetG, PetL, PetM and PetN. The complex functions as a dimer.

The protein resides in the cellular thylakoid membrane. In terms of biological role, component of the cytochrome b6-f complex, which mediates electron transfer between photosystem II (PSII) and photosystem I (PSI), cyclic electron flow around PSI, and state transitions. PetG is required for either the stability or assembly of the cytochrome b6-f complex. The polypeptide is Cytochrome b6-f complex subunit 5 (Rippkaea orientalis (strain PCC 8801 / RF-1) (Cyanothece sp. (strain PCC 8801))).